A 133-amino-acid chain; its full sequence is Maturin (133 aa).

This sequence belongs to the MTURN family.

It is found in the cytoplasm. Functionally, may be involved in early neuronal development. May play a role in promoting megakaryocyte differentiation. This is Maturin (mturn) from Danio rerio (Zebrafish).